The sequence spans 433 residues: 5-methylthioadenosine/S-adenosylhomocysteine deaminase (433 aa).

Zn(2+) is bound by residues His-67 and His-69. Residues Glu-96, Arg-148, and His-187 each coordinate substrate. His-214 contributes to the Zn(2+) binding site. 2 residues coordinate substrate: Glu-217 and Asp-302. Position 302 (Asp-302) interacts with Zn(2+).

This sequence belongs to the metallo-dependent hydrolases superfamily. MTA/SAH deaminase family. Requires Zn(2+) as cofactor.

The catalysed reaction is S-adenosyl-L-homocysteine + H2O + H(+) = S-inosyl-L-homocysteine + NH4(+). The enzyme catalyses S-methyl-5'-thioadenosine + H2O + H(+) = S-methyl-5'-thioinosine + NH4(+). Catalyzes the deamination of 5-methylthioadenosine and S-adenosyl-L-homocysteine into 5-methylthioinosine and S-inosyl-L-homocysteine, respectively. Is also able to deaminate adenosine. The protein is 5-methylthioadenosine/S-adenosylhomocysteine deaminase of Carboxydothermus hydrogenoformans (strain ATCC BAA-161 / DSM 6008 / Z-2901).